The chain runs to 218 residues: Tegument protein UL51 homolog (218 aa).

C11 carries S-palmitoyl cysteine; by host lipidation. Residues 199–218 (APPPVVRQPEHSGPTELALT) form a disordered region.

This sequence belongs to the herpesviridae UL51 family. Homodimer. Interacts with BBRF2; the BBRF2-BSRF1 complexes oligomerize which might play a role in tethering the viral nucleocapsids to the host Golgi membrane during secondary envelopment. Interacts with BGLF3.5. Interacts with BALF1. Interacts with glycoprotein gB. Interacts with glycoprotein heterodimer gH/gL. Post-translationally, phosphorylated. In terms of processing, palmitoylation is necessary for Golgi localization.

Its subcellular location is the host cytoplasm. The protein localises to the virion. It is found in the host Golgi apparatus. In terms of biological role, plays several roles during the time course of infection, including egress of virus particles from the perinuclear space and secondary envelopment of cytoplasmic capsids that bud into specific trans-Golgi network (TGN)-derived membranes. The sequence is that of Tegument protein UL51 homolog from Homo sapiens (Human).